The chain runs to 438 residues: MGLGFSSKKQLPAYCGPLPVGSLVLELSVPEEFRCEYKTIEHKLRTVKVRIFYPLDPTKDVEPRTDELWLPFHEGIPEVAKGFRWWLLRAFASGLTNLALPVYKGELFHPPNNGKLPVFIFSHGLVGSRNVYSSLCGTIASYGIVVLAMEHRDNSAIISTVRDPLHPEEPPYVVQYREISDFYADATVVLQNERLLFRQQEIQIALQMIRNINDLGTPDENLPFLCSVDSSFYNSVFQSMKGNLNTAQGELIVAGHSFGAATCAFISGSSTKSLYNDYMFHTEFKCSILYDIWMLPVRQLHLSTMRYPTLMIISYEFRRFVDNFQALESWLVNKDSENQNAGESADEKMSVVPLKKYSHVFVYDGTVHANQSDLPILLPRMVLRVLKGKFEADPYEALRINTRSSVQFLRENHVENVQGDNDPSSLQTNIIPGWERIM.

Residue S257 is the Nucleophile of the active site. Residues D291 and H368 each act as charge relay system in the active site.

This sequence belongs to the serine esterase family.

It localises to the cytoplasm. The protein localises to the nucleus. It catalyses the reaction a 1-O-alkyl-2-acetyl-sn-glycero-3-phosphocholine + H2O = a 1-O-alkyl-sn-glycero-3-phosphocholine + acetate + H(+). In Schizosaccharomyces pombe (strain 972 / ATCC 24843) (Fission yeast), this protein is Putative phospholipase A2.